Consider the following 196-residue polypeptide: Ribosome maturation factor RimM (196 aa).

The PRC barrel domain occupies 118 to 196; that stretch reads QGEYYWRDLI…EMTVDWDPDF (79 aa).

It belongs to the RimM family. As to quaternary structure, binds ribosomal protein uS19.

It localises to the cytoplasm. Functionally, an accessory protein needed during the final step in the assembly of 30S ribosomal subunit, possibly for assembly of the head region. Essential for efficient processing of 16S rRNA. May be needed both before and after RbfA during the maturation of 16S rRNA. It has affinity for free ribosomal 30S subunits but not for 70S ribosomes. The sequence is that of Ribosome maturation factor RimM from Alcanivorax borkumensis (strain ATCC 700651 / DSM 11573 / NCIMB 13689 / SK2).